Consider the following 284-residue polypeptide: Bifunctional protein FolD (284 aa).

NADP(+) contacts are provided by residues Gly166–Ser168 and Ile232.

The protein belongs to the tetrahydrofolate dehydrogenase/cyclohydrolase family. In terms of assembly, homodimer.

The catalysed reaction is (6R)-5,10-methylene-5,6,7,8-tetrahydrofolate + NADP(+) = (6R)-5,10-methenyltetrahydrofolate + NADPH. It catalyses the reaction (6R)-5,10-methenyltetrahydrofolate + H2O = (6R)-10-formyltetrahydrofolate + H(+). It participates in one-carbon metabolism; tetrahydrofolate interconversion. Catalyzes the oxidation of 5,10-methylenetetrahydrofolate to 5,10-methenyltetrahydrofolate and then the hydrolysis of 5,10-methenyltetrahydrofolate to 10-formyltetrahydrofolate. The chain is Bifunctional protein FolD from Shewanella oneidensis (strain ATCC 700550 / JCM 31522 / CIP 106686 / LMG 19005 / NCIMB 14063 / MR-1).